Consider the following 397-residue polypeptide: MFHRIEEALEDLKQGKVVIVCDDENRENEGDFIALAEYITPETINFMITHGRGLVCVPITEGYAERLQLEPMVAHNTDSHHTAFTVSIDHVSTTTGISAHERATTIREMLNPASKGADFNRPGHIFPLIAKEGGVLRRAGHTEAAVDLAQLCGAEPAGVICEIINEDGTMARVPDLLQCAKQFDIKMITIEDLIAYRRHHETLVTREVEITLPTDFGTFHAIGYSNSLDTKEHIALVKGDISTGEPVLVRVHSECLTGDVFGSCRCDCGPQLHAALAQIEREGKGVLLYMRQEGRGIGLLNKLRAYKLQEEGFDTVEANEKLGFPADLRDYGIGAQILKDLGLQHLRLLTNNPRKIAGLQGYDLEVIERVPLQMPAKEENKTYLQTKVNKLGHLLNL.

The interval 1 to 199 is DHBP synthase; it reads MFHRIEEALE…IEDLIAYRRH (199 aa). D-ribulose 5-phosphate-binding positions include 26-27, Asp-31, 138-142, and Glu-162; these read RE and RAGHT. Glu-27 contacts Mg(2+). His-141 contacts Mg(2+). The GTP cyclohydrolase II stretch occupies residues 200–397; the sequence is HETLVTREVE…VNKLGHLLNL (198 aa). 250–254 lines the GTP pocket; that stretch reads RVHSE. Residues Cys-255, Cys-266, and Cys-268 each contribute to the Zn(2+) site. Residues Gln-271, 293–295, and Thr-315 each bind GTP; that span reads EGR. Asp-327 acts as the Proton acceptor; for GTP cyclohydrolase activity in catalysis. Arg-329 functions as the Nucleophile; for GTP cyclohydrolase activity in the catalytic mechanism. GTP is bound by residues Thr-350 and Lys-355.

It in the N-terminal section; belongs to the DHBP synthase family. This sequence in the C-terminal section; belongs to the GTP cyclohydrolase II family. The cofactor is Mg(2+). It depends on Mn(2+) as a cofactor. Zn(2+) serves as cofactor.

It carries out the reaction D-ribulose 5-phosphate = (2S)-2-hydroxy-3-oxobutyl phosphate + formate + H(+). The catalysed reaction is GTP + 4 H2O = 2,5-diamino-6-hydroxy-4-(5-phosphoribosylamino)-pyrimidine + formate + 2 phosphate + 3 H(+). It functions in the pathway cofactor biosynthesis; riboflavin biosynthesis; 2-hydroxy-3-oxobutyl phosphate from D-ribulose 5-phosphate: step 1/1. Its pathway is cofactor biosynthesis; riboflavin biosynthesis; 5-amino-6-(D-ribitylamino)uracil from GTP: step 1/4. Its function is as follows. Catalyzes the conversion of D-ribulose 5-phosphate to formate and 3,4-dihydroxy-2-butanone 4-phosphate. Functionally, catalyzes the conversion of GTP to 2,5-diamino-6-ribosylamino-4(3H)-pyrimidinone 5'-phosphate (DARP), formate and pyrophosphate. This Bacillus cereus (strain ATCC 10987 / NRS 248) protein is Riboflavin biosynthesis protein RibBA.